We begin with the raw amino-acid sequence, 256 residues long: Thiazole synthase (256 aa).

The Schiff-base intermediate with DXP role is filled by lysine 95. Residues glycine 156, 182–183 (AG), and 204–205 (NT) each bind 1-deoxy-D-xylulose 5-phosphate.

This sequence belongs to the ThiG family. As to quaternary structure, homotetramer. Forms heterodimers with either ThiH or ThiS.

The protein resides in the cytoplasm. It carries out the reaction [ThiS sulfur-carrier protein]-C-terminal-Gly-aminoethanethioate + 2-iminoacetate + 1-deoxy-D-xylulose 5-phosphate = [ThiS sulfur-carrier protein]-C-terminal Gly-Gly + 2-[(2R,5Z)-2-carboxy-4-methylthiazol-5(2H)-ylidene]ethyl phosphate + 2 H2O + H(+). The protein operates within cofactor biosynthesis; thiamine diphosphate biosynthesis. Catalyzes the rearrangement of 1-deoxy-D-xylulose 5-phosphate (DXP) to produce the thiazole phosphate moiety of thiamine. Sulfur is provided by the thiocarboxylate moiety of the carrier protein ThiS. In vitro, sulfur can be provided by H(2)S. The protein is Thiazole synthase of Cronobacter sakazakii (strain ATCC BAA-894) (Enterobacter sakazakii).